A 290-amino-acid polypeptide reads, in one-letter code: HTH-type transcriptional activator RhaR (290 aa).

Positions 179 to 277 (DLIMSALQQS…GMTPRDYRQR (99 aa)) constitute an HTH araC/xylS-type domain. DNA-binding regions (H-T-H motif) lie at residues 196-217 (ADFC…RQQT) and 244-267 (ISDI…TREA).

In terms of assembly, binds DNA as a dimer.

The protein localises to the cytoplasm. Functionally, activates expression of the rhaSR operon in response to L-rhamnose. This is HTH-type transcriptional activator RhaR from Yersinia pseudotuberculosis serotype O:1b (strain IP 31758).